A 225-amino-acid polypeptide reads, in one-letter code: Alpha-tubulin N-acetyltransferase 1 (225 aa).

Positions 1 to 190 constitute an N-acetyltransferase domain; that stretch reads MEFPFDVDAL…NNFVIFEGFF (190 aa). Residue Lys-56 is modified to N6-acetyllysine; by autocatalysis. Position 124–137 (124–137) interacts with acetyl-CoA; sequence FYIHESLQRHGHGR. Residue Lys-146 is modified to N6-acetyllysine; by autocatalysis. 160–169 is a binding site for acetyl-CoA; the sequence is SQKLLKFLNK. A disordered region spans residues 195-225; that stretch reads PPARKLPPKRAEGDIKPYSSSDRESGLPQGW. A compositionally biased stretch (basic and acidic residues) spans 203-219; sequence KRAEGDIKPYSSSDRES. Lys-210 is subject to N6-acetyllysine; by autocatalysis.

The protein belongs to the acetyltransferase ATAT1 family. In terms of assembly, component of the BBSome complex. Interacts with AP2 alpha-adaptins, including AP2A2, but not with AP1 gamma-adaptin (AP1G1/AP1G2); this interaction is required for efficient alpha-tubulin acetylation, hence clathrin-coated pits are sites of microtubule acetylation. Post-translationally, autoacetylation strongly increases tubulin acetylation.

Its subcellular location is the cytoplasm. The protein localises to the membrane. The protein resides in the clathrin-coated pit. It is found in the cell junction. It localises to the focal adhesion. Its subcellular location is the cell projection. The protein localises to the axon. The protein resides in the cytoskeleton. It is found in the spindle. The catalysed reaction is L-lysyl-[alpha-tubulin] + acetyl-CoA = N(6)-acetyl-L-lysyl-[alpha-tubulin] + CoA + H(+). Its function is as follows. Specifically acetylates 'Lys-40' in alpha-tubulin on the lumenal side of microtubules. Promotes microtubule destabilization and accelerates microtubule dynamics; this activity may be independent of acetylation activity. Acetylates alpha-tubulin with a slow enzymatic rate, due to a catalytic site that is not optimized for acetyl transfer. Enters the microtubule through each end and diffuses quickly throughout the lumen of microtubules. Acetylates only long/old microtubules because of its slow acetylation rate since it does not have time to act on dynamically unstable microtubules before the enzyme is released. Required for normal sperm flagellar function. Promotes directional cell locomotion and chemotaxis, through AP2A2-dependent acetylation of alpha-tubulin at clathrin-coated pits that are concentrated at the leading edge of migrating cells. May facilitate primary cilium assembly. The chain is Alpha-tubulin N-acetyltransferase 1 from Bos taurus (Bovine).